Here is a 313-residue protein sequence, read N- to C-terminus: Leucine-rich repeat-containing protein 52 (313 aa).

An N-terminal signal peptide occupies residues 1–23; the sequence is MSLASGPGPGWLLFSFGMGLVSG. An LRRNT domain is found at 24 to 53; it reads SKCPNNCLCQAQEVICTGKQLTEYPLDIPL. Residues 24–244 are Extracellular-facing; sequence SKCPNNCLCQ…MCITHLDHKD (221 aa). 2 disulfide bridges follow: Cys26–Cys32 and Cys30–Cys39. 5 LRR repeats span residues 54 to 75, 78 to 99, 102 to 123, 126 to 148, and 151 to 172; these read NTRR…HLGL, DLVY…TFIG, KLIY…TFSV, NLVQ…TFAN, and SLRY…ALYH. Residues Asn112 and Asn148 are each glycosylated (N-linked (GlcNAc...) asparagine). Residues 184 to 238 enclose the LRRCT domain; that stretch reads NPWKCNCSFLDFAIFLIVFHMDPSDDLNATCVEPTELTGWPITRVGNPLRYMCIT. 2 disulfide bridges follow: Cys188–Cys214 and Cys190–Cys236. Asn189 and Asn211 each carry an N-linked (GlcNAc...) asparagine glycan. Residues 245–265 traverse the membrane as a helical segment; that stretch reads YIFLLLIGFCIFAAGTVAAWL. Over 266–313 the chain is Cytoplasmic; the sequence is TGVCAVLYQNTRHKSSEEDEDEAGTRVEVSRRIFQTQTSSVQEFPQLI.

In terms of assembly, may interact with KCNU1; this interaction may be required for LRRC52 stability and may change the channel gating properties. Interacts with KCNMA1. Post-translationally, N-glycosylated. Mainly expressed in testis and skeletal muscle.

The protein resides in the cell membrane. Auxiliary protein of the large-conductance, voltage and calcium-activated potassium channel (BK alpha). Modulates gating properties by producing a marked shift in the BK channel's voltage dependence of activation in the hyperpolarizing direction, and in the absence of calcium. KCNU1 channel auxiliary protein. Modulates KCNU1 gating properties. This Homo sapiens (Human) protein is Leucine-rich repeat-containing protein 52 (LRRC52).